A 509-amino-acid polypeptide reads, in one-letter code: Cardiolipin synthase 1 (509 aa).

The next 3 helical transmembrane spans lie at 4 to 24, 30 to 50, and 59 to 79; these read PIVQLLLIFTIVSIVLFLLNT, YTFVGALWSITIVGISFVIFI, and LAWFLVLALLPIIGVLLYAIF. PLD phosphodiesterase domains are found at residues 238-265 and 422-449; these read VNYRNHRKIVIVDGEIGFTGGLNVGDEY and KDGFMHAKIVLVDDTIATIGTANMDVRS. Catalysis depends on residues H243, K245, D250, H427, K429, and D434.

It belongs to the phospholipase D family. Cardiolipin synthase subfamily.

Its subcellular location is the cell membrane. It carries out the reaction 2 a 1,2-diacyl-sn-glycero-3-phospho-(1'-sn-glycerol) = a cardiolipin + glycerol. Its function is as follows. Catalyzes the reversible phosphatidyl group transfer from one phosphatidylglycerol molecule to another to form cardiolipin (CL) (diphosphatidylglycerol) and glycerol. The polypeptide is Cardiolipin synthase 1 (cls1) (Bacillus cereus (strain ATCC 14579 / DSM 31 / CCUG 7414 / JCM 2152 / NBRC 15305 / NCIMB 9373 / NCTC 2599 / NRRL B-3711)).